The primary structure comprises 237 residues: Arginine-binding periplasmic protein (237 aa).

Residues 1–18 (MKKTLLTLLFGCVVTAQA) form the signal peptide.

It belongs to the bacterial solute-binding protein 3 family.

The protein resides in the periplasm. Binds arginine; part of the arginine periplasmic transport system. The polypeptide is Arginine-binding periplasmic protein (lapT) (Mannheimia haemolytica (Pasteurella haemolytica)).